The following is a 295-amino-acid chain: G1/S-specific cyclin-D1 (295 aa).

Residues 28-152 (LRAMLKAEET…VLVNKLKWNL (125 aa)) form the Cyclin N-terminal domain. The segment at 264-295 (QQNLDPKAAEEEEEEEEVDLACTPTDVRDVNI) is disordered. Lysine 270 is covalently cross-linked (Glycyl lysine isopeptide (Lys-Gly) (interchain with G-Cter in ubiquitin)). Residues 273–282 (EEEEEEEEVD) are compositionally biased toward acidic residues. Threonine 286 carries the phosphothreonine modification.

This sequence belongs to the cyclin family. Cyclin D subfamily. As to quaternary structure, interacts with either CDK4 or CDK6 protein kinase to form a serine/threonine kinase holoenzyme complex. The cyclin subunit imparts substrate specificity to the complex. Component of the ternary complex CCND1/CDK4/CDKN1B required for nuclear translocation and modulation of CDK4-mediated kinase activity. Interacts directly with CDKN1B. Can form similar complexes with either CDKN1A or CDKN2A. Interacts with UHRF2; the interaction ubiquitinates CCND1 and appears to occur independently of phosphorylation. Interacts with USP2. Interacts (via cyclin N-terminal domain) with INSM1 (via N-terminal region); the interaction competes with the binding of CCND1 to CDK4 during cell cycle progression and inhibits CDK4 activity. Interacts with CDK4; the interaction is prevented with the binding of CCND1 to INSM1 during cell cycle progression. Phosphorylation at Thr-286 by MAP kinases is required for ubiquitination and degradation by the DCX(AMBRA1) complex. It also plays an essential role for recognition by the FBXO31 component of SCF (SKP1-cullin-F-box) protein ligase complex following DNA damage. In terms of processing, ubiquitinated at Lys-270 by the DCX(AMBRA1) complex during the transition from G1 to S cell phase, leading to its degradation: ubiquitination is dependent on Thr-286 phosphorylation. The DCX(AMBRA1) complex represents the major regulator of CCND1 stability during the G1/S transition. Also ubiquitinated by the SCF(FBXO4) and Cul7-RING(FBXW8) ubiquitin-protein ligase complexes. Following DNA damage it is ubiquitinated by the SCF(FBXO31) protein ligase complex. SCF(FBXO31) ubiquitination is dependent on Thr-286 phosphorylation. Ubiquitinated also by UHRF2 apparently in a phosphorylation-independent manner. Ubiquitination leads to its degradation and G1 arrest. Deubiquitinated by USP2; leading to its stabilization.

Its subcellular location is the nucleus. The protein resides in the cytoplasm. It is found in the nucleus membrane. Regulatory component of the cyclin D1-CDK4 (DC) complex that phosphorylates and inhibits members of the retinoblastoma (RB) protein family including RB1 and regulates the cell-cycle during G(1)/S transition. Phosphorylation of RB1 allows dissociation of the transcription factor E2F from the RB/E2F complex and the subsequent transcription of E2F target genes which are responsible for the progression through the G(1) phase. Hypophosphorylates RB1 in early G(1) phase. Cyclin D-CDK4 complexes are major integrators of various mitogenenic and antimitogenic signals. Also a substrate for SMAD3, phosphorylating SMAD3 in a cell-cycle-dependent manner and repressing its transcriptional activity. Component of the ternary complex, cyclin D1/CDK4/CDKN1B, required for nuclear translocation and activity of the cyclin D-CDK4 complex. Exhibits transcriptional corepressor activity with INSM1 on the NEUROD1 and INS promoters in a cell cycle-independent manner. The polypeptide is G1/S-specific cyclin-D1 (CCND1) (Bos taurus (Bovine)).